A 501-amino-acid chain; its full sequence is Histidine--tRNA ligase (501 aa).

It belongs to the class-II aminoacyl-tRNA synthetase family. As to quaternary structure, homodimer.

The protein localises to the cytoplasm. The catalysed reaction is tRNA(His) + L-histidine + ATP = L-histidyl-tRNA(His) + AMP + diphosphate + H(+). The sequence is that of Histidine--tRNA ligase from Methylocella silvestris (strain DSM 15510 / CIP 108128 / LMG 27833 / NCIMB 13906 / BL2).